Reading from the N-terminus, the 2115-residue chain is Non-reducing polyketide synthase PFUR17_0229 (2115 aa).

Residues 8 to 246 are N-terminal acylcarrier protein transacylase (SAT) domain (SAT); sequence VLFGDQTVDP…ISLPITAAFH (239 aa). Residues 367–796 enclose the Ketosynthase family 3 (KS3) domain; that stretch reads SGDIAIVGVA…GGNTSLVLED (430 aa). Active-site for beta-ketoacyl synthase activity residues include Cys539, His674, and His713. Positions 895-1218 are malonyl-CoA:ACP transacylase (MAT) domain; the sequence is IFAFTGQGAQ…SISNAYNSGA (324 aa). The tract at residues 1279-1592 is product template (PT) domain; that stretch reads TTCLQKVESE…KRNILQSLLS (314 aa). Positions 1282 to 1413 are N-terminal hotdog fold; the sequence is LQKVESETFT…CTVMYGDGQQ (132 aa). The region spanning 1282-1588 is the PKS/mFAS DH domain; the sequence is LQKVESETFT…FQKMKRNILQ (307 aa). His1315 functions as the Proton acceptor; for dehydratase activity in the catalytic mechanism. The tract at residues 1441–1588 is C-terminal hotdog fold; it reads VHRLLKEMIY…FQKMKRNILQ (148 aa). Asp1501 (proton donor; for dehydratase activity) is an active-site residue. A disordered region spans residues 1594–1613; it reads GHEETPPARPVPSKRTVQGS. The Carrier 1 domain maps to 1626 to 1703; sequence KAASGGFSNI…QLRNFFLDKV (78 aa). At Ser1663 the chain carries O-(pantetheine 4'-phosphoryl)serine. Residues 1710–1742 form a disordered region; it reads FDDEESEMSSSTAGSTPGSSTSHGNQNTTVTTP. Residues 1718–1733 are compositionally biased toward low complexity; sequence SSSTAGSTPGSSTSHG. The Carrier 2 domain occupies 1742–1819; it reads PAEPDVVAIL…DVQKALGVPS (78 aa). Ser1779 carries the post-translational modification O-(pantetheine 4'-phosphoryl)serine. The thioesterase (TE) domain stretch occupies residues 1861-2097; it reads LFLLPDGAGS…VVGGNHFSIM (237 aa).

Pantetheine 4'-phosphate is required as a cofactor.

The enzyme catalyses 6 malonyl-CoA + 2 acetyl-CoA + 5 H(+) = o-orsellinate depside + 6 CO2 + 8 CoA + H2O. Non-reducing polyketide synthase; part of a gene cluster that mediates the biosynthesis of a yet unidentified depside/depsidone compound. The first step in the pathway is performed by the PKS PFUR17_0229 that condenses 2 acetyl-CoA starter units with 6 malonyl-CoA units to produce lecanoric acid (LA), also known as orsellinate depside. The biosynthesis occurs via the formation of 2 orsellinate intermediates fused together by the C-terminal thioesterase (TE) domain that finally releases lecanoric acid. In addition to the PKS gene, the PFUR17 gene cluster contains closely linked genes encoding a cytochrome P-450 and a laccase (phenol oxidase), directly upstream and downstream respectively, so it is likely that lecanoric acid is an intermediate in a longer biosynthetic pathway. This Pseudevernia furfuracea (Tree moss) protein is Non-reducing polyketide synthase PFUR17_0229.